A 463-amino-acid polypeptide reads, in one-letter code: Glutamate--tRNA ligase 2 (463 aa).

The 'HIGH' region motif lies at 11-21; sequence PSPTGYLHIGG. Residues 240-244 carry the 'KMSKS' region motif; that stretch reads KLSKR. K243 provides a ligand contact to ATP.

This sequence belongs to the class-I aminoacyl-tRNA synthetase family. Glutamate--tRNA ligase type 1 subfamily. Monomer.

It localises to the cytoplasm. It catalyses the reaction tRNA(Glu) + L-glutamate + ATP = L-glutamyl-tRNA(Glu) + AMP + diphosphate. Its function is as follows. Catalyzes the attachment of glutamate to tRNA(Glu) in a two-step reaction: glutamate is first activated by ATP to form Glu-AMP and then transferred to the acceptor end of tRNA(Glu). The chain is Glutamate--tRNA ligase 2 from Campylobacter jejuni (strain RM1221).